We begin with the raw amino-acid sequence, 537 residues long: Zinc metalloproteinase nas-23 (537 aa).

A signal peptide spans Met1–Gly16. The propeptide occupies Val17 to Arg111. A glycan (N-linked (GlcNAc...) asparagine) is linked at Asn77. Residues Asn116–Glu311 enclose the Peptidase M12A domain. Cystine bridges form between Cys156–Cys310, Cys178–Cys199, Cys314–Cys334, Cys336–Cys345, Cys356–Cys385, and Cys412–Cys433. His207 is a Zn(2+) binding site. Residue Glu208 is part of the active site. The Zn(2+) site is built by His211 and His217. The EGF-like domain occupies Arg306–Lys346. Positions Cys356–Gly471 constitute a CUB domain. The N-linked (GlcNAc...) asparagine glycan is linked to Asn481.

It depends on Zn(2+) as a cofactor. As to expression, expressed in the hypodermis, rectum and to a lesser extent in pharyngeal muscles and intestine.

It localises to the secreted. Functionally, metalloprotease. This is Zinc metalloproteinase nas-23 (nas-23) from Caenorhabditis elegans.